A 358-amino-acid polypeptide reads, in one-letter code: Phosphoserine aminotransferase (358 aa).

R41 lines the L-glutamate pocket. Residues 75 to 76 (AS), W100, T148, D167, and Q190 each bind pyridoxal 5'-phosphate. Position 191 is an N6-(pyridoxal phosphate)lysine (K191). 233 to 234 (NT) lines the pyridoxal 5'-phosphate pocket.

The protein belongs to the class-V pyridoxal-phosphate-dependent aminotransferase family. SerC subfamily. Homodimer. Pyridoxal 5'-phosphate is required as a cofactor.

Its subcellular location is the cytoplasm. The catalysed reaction is O-phospho-L-serine + 2-oxoglutarate = 3-phosphooxypyruvate + L-glutamate. The enzyme catalyses 4-(phosphooxy)-L-threonine + 2-oxoglutarate = (R)-3-hydroxy-2-oxo-4-phosphooxybutanoate + L-glutamate. The protein operates within amino-acid biosynthesis; L-serine biosynthesis; L-serine from 3-phospho-D-glycerate: step 2/3. It functions in the pathway cofactor biosynthesis; pyridoxine 5'-phosphate biosynthesis; pyridoxine 5'-phosphate from D-erythrose 4-phosphate: step 3/5. Catalyzes the reversible conversion of 3-phosphohydroxypyruvate to phosphoserine and of 3-hydroxy-2-oxo-4-phosphonooxybutanoate to phosphohydroxythreonine. The polypeptide is Phosphoserine aminotransferase (Campylobacter jejuni subsp. jejuni serotype O:23/36 (strain 81-176)).